The primary structure comprises 319 residues: MENLILEIISGKQVTKEEALKFFDFELEEIFFAATKIRRKYKGNKVKVCSIINAKSGQCSEDCRFCTQSTFNKTDVKVYSLTDTEKIKEFSTKALENVGCFGIVSSGNSLNDVEIEKLCEMFKNHKKVSHLGVSIGKISDETFLKLKEAGIKKMHHNLETSENFYPNICSTHNYQERVDTIKRAKKFGFEICSGGLFGMGESLKDRIDLAFTLKALDANSIPMNFLMHIKGTALEHLPALPPVEILKTIAVFRIILKTPDIMICGGREVNLRDLQSWIFQAGANGMMTGGYLTTIGRDITSDKQMIKDLGLEIEPNHTY.

One can recognise a Radical SAM core domain in the interval 41–267 (YKGNKVKVCS…TPDIMICGGR (227 aa)). The [4Fe-4S] cluster site is built by Cys-59, Cys-63, and Cys-66. Cys-192 is a [2Fe-2S] cluster binding site.

This sequence belongs to the radical SAM superfamily. Biotin synthase family. Homodimer. Requires [4Fe-4S] cluster as cofactor. [2Fe-2S] cluster serves as cofactor.

It catalyses the reaction (4R,5S)-dethiobiotin + (sulfur carrier)-SH + 2 reduced [2Fe-2S]-[ferredoxin] + 2 S-adenosyl-L-methionine = (sulfur carrier)-H + biotin + 2 5'-deoxyadenosine + 2 L-methionine + 2 oxidized [2Fe-2S]-[ferredoxin]. It participates in cofactor biosynthesis; biotin biosynthesis; biotin from 7,8-diaminononanoate: step 2/2. In terms of biological role, catalyzes the conversion of dethiobiotin (DTB) to biotin by the insertion of a sulfur atom into dethiobiotin via a radical-based mechanism. The polypeptide is Biotin synthase (Endomicrobium trichonymphae).